We begin with the raw amino-acid sequence, 39 residues long: Cytochrome b6-f complex subunit 5 (39 aa).

Residues 5–25 (LLCGIVLGLVPITLLGLFVSA) traverse the membrane as a helical segment.

It belongs to the PetG family. In terms of assembly, the 4 large subunits of the cytochrome b6-f complex are cytochrome b6, subunit IV (17 kDa polypeptide, PetD), cytochrome f and the Rieske protein, while the 4 small subunits are PetG, PetL, PetM and PetN. The complex functions as a dimer.

The protein resides in the cellular thylakoid membrane. Functionally, component of the cytochrome b6-f complex, which mediates electron transfer between photosystem II (PSII) and photosystem I (PSI), cyclic electron flow around PSI, and state transitions. PetG is required for either the stability or assembly of the cytochrome b6-f complex. This is Cytochrome b6-f complex subunit 5 from Prochlorococcus marinus (strain MIT 9515).